Reading from the N-terminus, the 344-residue chain is Phosphoribosylformylglycinamidine cyclo-ligase (344 aa).

This sequence belongs to the AIR synthase family.

The protein resides in the cytoplasm. The catalysed reaction is 2-formamido-N(1)-(5-O-phospho-beta-D-ribosyl)acetamidine + ATP = 5-amino-1-(5-phospho-beta-D-ribosyl)imidazole + ADP + phosphate + H(+). It functions in the pathway purine metabolism; IMP biosynthesis via de novo pathway; 5-amino-1-(5-phospho-D-ribosyl)imidazole from N(2)-formyl-N(1)-(5-phospho-D-ribosyl)glycinamide: step 2/2. This chain is Phosphoribosylformylglycinamidine cyclo-ligase, found in Laribacter hongkongensis (strain HLHK9).